We begin with the raw amino-acid sequence, 192 residues long: uncharacterized protein (192 aa).

The protein resides in the virion. This is an uncharacterized protein from Acanthamoeba polyphaga mimivirus (APMV).